The following is a 138-amino-acid chain: MRTLWIMAVLLVGVEGHLMQFENMIKKVTGRSGIWWYGSYGCYCGKGGQGLPQDASDRCCFVHDCCYGKVNGCDPKDDFYVYSSENRDIVCGEDNPCTKEICECDKAAAICFRDNMDTYQNKYWFYPSSNCNEESEPC.

The first 16 residues, 1-16 (MRTLWIMAVLLVGVEG), serve as a signal peptide directing secretion. 7 disulfide bridges follow: cysteine 42-cysteine 131, cysteine 44-cysteine 60, cysteine 59-cysteine 111, cysteine 65-cysteine 138, cysteine 66-cysteine 104, cysteine 73-cysteine 97, and cysteine 91-cysteine 102. Ca(2+) is bound by residues tyrosine 43, glycine 45, and glycine 47. Residue histidine 63 is part of the active site. Aspartate 64 contributes to the Ca(2+) binding site. Residue aspartate 105 is part of the active site.

It belongs to the phospholipase A2 family. Group II subfamily. D49 sub-subfamily. In terms of assembly, homodimer. Ca(2+) serves as cofactor. Expressed by the venom gland.

Its subcellular location is the secreted. The enzyme catalyses a 1,2-diacyl-sn-glycero-3-phosphocholine + H2O = a 1-acyl-sn-glycero-3-phosphocholine + a fatty acid + H(+). Functionally, snake venom phospholipase A2 (PLA2) that has high lipolytic activity. PLA2 catalyzes the calcium-dependent hydrolysis of the 2-acyl groups in 3-sn-phosphoglycerides. The protein is Acidic phospholipase A2 6 of Craspedocephalus gramineus (Bamboo pit viper).